A 226-amino-acid chain; its full sequence is UPF0173 metal-dependent hydrolase SRU_1937 (226 aa).

Belongs to the UPF0173 family.

The sequence is that of UPF0173 metal-dependent hydrolase SRU_1937 from Salinibacter ruber (strain DSM 13855 / M31).